Consider the following 67-residue polypeptide: SPbeta prophage-derived uncharacterized protein YoqF (67 aa).

The sequence is that of SPbeta prophage-derived uncharacterized protein YoqF (yoqF) from Bacillus subtilis (strain 168).